The following is a 586-amino-acid chain: CTP synthase 2 (586 aa).

Residues 300–554 (SIALVGKYTK…LAATGNLNAH (255 aa)) form the Glutamine amidotransferase type-1 domain. Catalysis depends on for GATase activity residues Cys-399, His-526, and Glu-528. Ser-568, Ser-571, and Ser-574 each carry phosphoserine.

This sequence belongs to the CTP synthase family.

It carries out the reaction UTP + L-glutamine + ATP + H2O = CTP + L-glutamate + ADP + phosphate + 2 H(+). Its pathway is pyrimidine metabolism; CTP biosynthesis via de novo pathway; CTP from UDP: step 2/2. Functionally, catalyzes the ATP-dependent amination of UTP to CTP with either L-glutamine or ammonia as the source of nitrogen. Constitutes the rate-limiting enzyme in the synthesis of cytosine nucleotides. This is CTP synthase 2 (Ctps2) from Mus musculus (Mouse).